A 659-amino-acid polypeptide reads, in one-letter code: UvrABC system protein B (659 aa).

A Helicase ATP-binding domain is found at 25–412 (QSIENGNRGQ…SEIVAEQIIR (388 aa)). 38 to 45 (GVTGSGKT) is a binding site for ATP. A Beta-hairpin motif is present at residues 91-114 (YYDYYQPEAYVPQTDTFIEKDASI). One can recognise a Helicase C-terminal domain in the interval 429-582 (QIDDLYGEIQ…QMEYNEEHNI (154 aa)). One can recognise a UVR domain in the interval 622–657 (EKLIEQYEEEMKEAAKNLQFERAAELRDIIKDLKEN).

It belongs to the UvrB family. As to quaternary structure, forms a heterotetramer with UvrA during the search for lesions. Interacts with UvrC in an incision complex.

The protein localises to the cytoplasm. Its function is as follows. The UvrABC repair system catalyzes the recognition and processing of DNA lesions. A damage recognition complex composed of 2 UvrA and 2 UvrB subunits scans DNA for abnormalities. Upon binding of the UvrA(2)B(2) complex to a putative damaged site, the DNA wraps around one UvrB monomer. DNA wrap is dependent on ATP binding by UvrB and probably causes local melting of the DNA helix, facilitating insertion of UvrB beta-hairpin between the DNA strands. Then UvrB probes one DNA strand for the presence of a lesion. If a lesion is found the UvrA subunits dissociate and the UvrB-DNA preincision complex is formed. This complex is subsequently bound by UvrC and the second UvrB is released. If no lesion is found, the DNA wraps around the other UvrB subunit that will check the other stand for damage. The sequence is that of UvrABC system protein B from Clostridium perfringens (strain 13 / Type A).